The chain runs to 464 residues: Armadillo repeat-containing protein 6 homolog (464 aa).

The residue at position 9 (Thr9) is a Phosphothreonine. ARM repeat units lie at residues 235–275 (AHEH…TLAV), 287–331 (GGLK…QQGV), 332–374 (APII…FDTG), and 375–418 (IAEV…ISFG).

This sequence belongs to the ARMC6 family.

The polypeptide is Armadillo repeat-containing protein 6 homolog (Drosophila melanogaster (Fruit fly)).